A 205-amino-acid chain; its full sequence is Ribosomal RNA large subunit methyltransferase E (205 aa).

S-adenosyl-L-methionine-binding residues include glycine 60, tryptophan 62, aspartate 80, aspartate 96, and aspartate 121. Lysine 161 functions as the Proton acceptor in the catalytic mechanism.

Belongs to the class I-like SAM-binding methyltransferase superfamily. RNA methyltransferase RlmE family.

The protein resides in the cytoplasm. The catalysed reaction is uridine(2552) in 23S rRNA + S-adenosyl-L-methionine = 2'-O-methyluridine(2552) in 23S rRNA + S-adenosyl-L-homocysteine + H(+). Its function is as follows. Specifically methylates the uridine in position 2552 of 23S rRNA at the 2'-O position of the ribose in the fully assembled 50S ribosomal subunit. The chain is Ribosomal RNA large subunit methyltransferase E from Azoarcus sp. (strain BH72).